We begin with the raw amino-acid sequence, 105 residues long: Thioredoxin (105 aa).

The 105-residue stretch at 1 to 105 (VQVISSYDQF…LQAAITQHSA (105 aa)) folds into the Thioredoxin domain. Active-site nucleophile residues include Cys-29 and Cys-32. A disulfide bond links Cys-29 and Cys-32.

It belongs to the thioredoxin family. As to quaternary structure, monomer.

Its function is as follows. Participates in various redox reactions through the reversible oxidation of its active center dithiol to a disulfide and catalyzes dithiol-disulfide exchange reactions. This is Thioredoxin from Malassezia sympodialis (Atopic eczema-associated yeast).